Consider the following 136-residue polypeptide: Peptide methionine sulfoxide reductase MsrB (136 aa).

A MsrB domain is found at 13-135; it reads ENDWRSKLTP…NSASLDFKDK (123 aa). The Zn(2+) site is built by Cys-52, Cys-55, Cys-101, and Cys-104. The Nucleophile role is filled by Cys-124.

It belongs to the MsrB Met sulfoxide reductase family. The cofactor is Zn(2+).

It carries out the reaction L-methionyl-[protein] + [thioredoxin]-disulfide + H2O = L-methionyl-(R)-S-oxide-[protein] + [thioredoxin]-dithiol. This chain is Peptide methionine sulfoxide reductase MsrB, found in Synechococcus sp. (strain RCC307).